We begin with the raw amino-acid sequence, 81 residues long: Small hydrophobic protein (81 aa).

The Intravirion segment spans residues 1-19; the sequence is MNSTSTIIEFTGEFWTYFT. The chain crosses the membrane as a helical; Signal-anchor for type II membrane protein span at residues 20–40; it reads LVFMMLTIGFFFIVTSLVAAI. Over 41–81 the chain is Virion surface; that stretch reads LNKLCDLNDHHTNSLDIRTKLRSDTQLITRAHEESINQSSN. N-linked (GlcNAc...) asparagine; by host glycosylation occurs at asparagine 77.

Belongs to the orthopneumovirus small hydrophobic protein family. In terms of assembly, homopentamer forming a funnel-like pore. Interacts with glycoprotein G; this interaction occurs on the surface of virion particles and infected cells. Interacts with host BCAP31 (via C-terminus); this interaction is direct. Post-translationally, four species of SH have been detected in infected cell cytoplasm: a 7.5 kDa non-glycosylated form (SH0), a 13-15 kDa form that contains one or two N-linked carbohydrate side chains of the high-mannose type (SHg), a 21-30 kDa polylactosaminoglycan-modified form of the protein (SHp), and the isoform generated by alternative translational initiation. Of these different forms, SH0 is by far the most abundant protein detected during virus infection. In terms of processing, tyrosine phosphorylated.

It is found in the virion membrane. The protein resides in the host cell membrane. It localises to the host Golgi apparatus membrane. Its subcellular location is the host endoplasmic reticulum membrane. Channel activity is inhibited by copper. Also inhibited by small-molecule pyronin B. In terms of biological role, viroporin that forms a homopentameric ion channel displaying low ion selectivity. May play a role in virus morphogenesis and pathogenicity at various stages of the viral life cycle. Accumulates at the membrane of the Golgi apparatus in infected cells and may facilitate virus release by modifying the secretory pathway. May enhance host membrane permeability and disrupt cellular ion homeostasis, which can be sensed as damage-associated molecular patterns/danger signals, triggering NLRP3 inflammasome activation and inflammatory immune response. Also inhibits host TNFA-mediated signaling pathway and may delay apoptosis, allowing time for the virus to replicate. The polypeptide is Small hydrophobic protein (SH) (Bos taurus (Bovine)).